Reading from the N-terminus, the 130-residue chain is MIGEWNNGTGRRKSSVARVFLKKGSGKITVNGKDIQQYFGRETSIMIAKQPLVLTNHVETFDIQVNVHGGGESGQAGATRHGITRALIDYDATLKSALSQAGFVTRDAREVERKKVGLHSARRAKQFSKR.

This sequence belongs to the universal ribosomal protein uS9 family.

The sequence is that of Small ribosomal subunit protein uS9 from Paracidovorax citrulli (strain AAC00-1) (Acidovorax citrulli).